A 407-amino-acid polypeptide reads, in one-letter code: Arginine biosynthesis bifunctional protein ArgJ (407 aa).

6 residues coordinate substrate: threonine 157, lysine 183, threonine 194, glutamate 280, asparagine 402, and threonine 407. Threonine 194 functions as the Nucleophile in the catalytic mechanism.

The protein belongs to the ArgJ family. As to quaternary structure, heterotetramer of two alpha and two beta chains.

It localises to the cytoplasm. The enzyme catalyses N(2)-acetyl-L-ornithine + L-glutamate = N-acetyl-L-glutamate + L-ornithine. The catalysed reaction is L-glutamate + acetyl-CoA = N-acetyl-L-glutamate + CoA + H(+). The protein operates within amino-acid biosynthesis; L-arginine biosynthesis; L-ornithine and N-acetyl-L-glutamate from L-glutamate and N(2)-acetyl-L-ornithine (cyclic): step 1/1. It participates in amino-acid biosynthesis; L-arginine biosynthesis; N(2)-acetyl-L-ornithine from L-glutamate: step 1/4. Functionally, catalyzes two activities which are involved in the cyclic version of arginine biosynthesis: the synthesis of N-acetylglutamate from glutamate and acetyl-CoA as the acetyl donor, and of ornithine by transacetylation between N(2)-acetylornithine and glutamate. This is Arginine biosynthesis bifunctional protein ArgJ from Bacillus anthracis.